We begin with the raw amino-acid sequence, 111 residues long: SLYPASALVLTVGHGADAATAEVQRAVTLSCRPTPTGTHPAPAQACAELHSVGGALGLLRTGAEPGRMCTKEWRPITVTAEGVWDGRRVSYEHTFANNCFKNAAPTTVFEF.

Cystine bridges form between cysteine 31-cysteine 46 and cysteine 69-cysteine 99.

Belongs to the protease inhibitor I16 (SSI) family. Homodimer.

It is found in the secreted. In terms of biological role, strong inhibitory activity toward subtilisin BPN' and, to a lesser extent, toward trypsin. The polypeptide is Subtilisin inhibitor-like protein 12 (Streptomyces hygroscopicus).